Reading from the N-terminus, the 297-residue chain is Protein-L-isoaspartate O-methyltransferase (297 aa).

The tract at residues 20–57 (RKPAPARTAGMPAVGAPGPAQAQAKARDKQPSAPTAAA) is disordered. A compositionally biased stretch (low complexity) spans 28–43 (AGMPAVGAPGPAQAQA). Residue S133 is part of the active site.

This sequence belongs to the methyltransferase superfamily. L-isoaspartyl/D-aspartyl protein methyltransferase family.

The protein resides in the cytoplasm. It carries out the reaction [protein]-L-isoaspartate + S-adenosyl-L-methionine = [protein]-L-isoaspartate alpha-methyl ester + S-adenosyl-L-homocysteine. In terms of biological role, catalyzes the methyl esterification of L-isoaspartyl residues in peptides and proteins that result from spontaneous decomposition of normal L-aspartyl and L-asparaginyl residues. It plays a role in the repair and/or degradation of damaged proteins. The protein is Protein-L-isoaspartate O-methyltransferase of Cupriavidus pinatubonensis (strain JMP 134 / LMG 1197) (Cupriavidus necator (strain JMP 134)).